A 367-amino-acid chain; its full sequence is Undecaprenyl-phosphate alpha-N-acetylglucosaminyl 1-phosphate transferase (367 aa).

A run of 9 helical transmembrane segments spans residues 3-23 (LLTA…FIFL), 45-65 (GVIP…MFGL), 69-89 (YIPH…VGAM), 129-149 (WELV…WAAI), 158-178 (IDGL…LILW), 187-207 (MWCF…LGIL), 213-233 (VFMG…LLLE), 242-262 (ISPV…VAIM), and 318-338 (VPEW…GYCI).

This sequence belongs to the glycosyltransferase 4 family. WecA subfamily. Requires Mg(2+) as cofactor. The cofactor is Mn(2+).

The protein localises to the cell inner membrane. It catalyses the reaction di-trans,octa-cis-undecaprenyl phosphate + UDP-N-acetyl-alpha-D-glucosamine = N-acetyl-alpha-D-glucosaminyl-di-trans,octa-cis-undecaprenyl diphosphate + UMP. It participates in bacterial outer membrane biogenesis; LPS O-antigen biosynthesis. The protein operates within bacterial outer membrane biogenesis; enterobacterial common antigen biosynthesis. With respect to regulation, inhibited by tunicamycin. In terms of biological role, catalyzes the transfer of the GlcNAc-1-phosphate moiety from UDP-GlcNAc onto the carrier lipid undecaprenyl phosphate (C55-P), yielding GlcNAc-pyrophosphoryl-undecaprenyl (GlcNAc-PP-C55). The protein is Undecaprenyl-phosphate alpha-N-acetylglucosaminyl 1-phosphate transferase of Salmonella typhimurium (strain LT2 / SGSC1412 / ATCC 700720).